Here is a 650-residue protein sequence, read N- to C-terminus: SUMO-activating enzyme subunit 2 (650 aa).

ATP is bound by residues 25–30, Asp49, 57–60, Lys73, 96–97, and 118–123; these read GAGGIG, NLNR, SI, and DNRAAR. Cys159 and Cys162 together coordinate Zn(2+). Residue Cys174 is the Glycyl thioester intermediate of the active site. Lys191 is covalently cross-linked (Glycyl lysine isopeptide (Lys-Gly) (interchain with G-Cter in SUMO)). Lys237 is covalently cross-linked (Glycyl lysine isopeptide (Lys-Gly) (interchain with G-Cter in SUMO1)). Glycyl lysine isopeptide (Lys-Gly) (interchain with G-Cter in SUMO) cross-links involve residues Lys258, Lys282, and Lys286. Cys446 and Cys449 together coordinate Zn(2+). The disordered stretch occupies residues 554–650; the sequence is DAPDKAPAPS…DDDEDIIALD (97 aa). The span at 572 to 586 shows a compositional bias: polar residues; that stretch reads ANGNKDSAQPSTSSK. Positions 590-603 are enriched in acidic residues; sequence EDDDVLLVDSDEEP. Ser599 bears the Phosphoserine mark. Residues Lys618 and Lys630 each participate in a glycyl lysine isopeptide (Lys-Gly) (interchain with G-Cter in SUMO) cross-link. The span at 638–650 shows a compositional bias: acidic residues; sequence PADDDDEDIIALD.

Belongs to the ubiquitin-activating E1 family. As to quaternary structure, heterodimer of sae1 and uba2/sae2. The heterodimer corresponds to the two domains that are encoded on a single polypeptide chain in ubiquitin-activating enzyme E1. Interacts with ube2i. Sumoylated with SUMO1 and SUMO2/3 and by UBC9. Sumoylation at Lys-237 inhibits enzymatic activity. Sumoylation at the C-terminal lysine cluster plays an essential role in nuclear trafficking. Expressed in eye, brain and pectoral fins.

It localises to the cytoplasm. Its subcellular location is the nucleus. The protein operates within protein modification; protein sumoylation. The heterodimer acts as an E1 ligase for sumo1, sumo2, and sumo3. It mediates ATP-dependent activation of sumo proteins followed by formation of a thioester bond between a sumo protein and a conserved active site cysteine residue on uba2/sae2. The chain is SUMO-activating enzyme subunit 2 (uba2) from Danio rerio (Zebrafish).